The chain runs to 406 residues: Cysteine desulfurase (406 aa).

N6-(pyridoxal phosphate)lysine is present on Lys226. The active-site Cysteine persulfide intermediate is the Cys364.

Belongs to the class-V pyridoxal-phosphate-dependent aminotransferase family. Csd subfamily. Homodimer. Interacts with SufE and the SufBCD complex composed of SufB, SufC and SufD. The interaction with SufE is required to mediate the direct transfer of the sulfur atom from the S-sulfanylcysteine. The cofactor is pyridoxal 5'-phosphate.

Its subcellular location is the cytoplasm. The enzyme catalyses (sulfur carrier)-H + L-cysteine = (sulfur carrier)-SH + L-alanine. It catalyses the reaction L-selenocysteine + AH2 = hydrogenselenide + L-alanine + A + H(+). It participates in cofactor biosynthesis; iron-sulfur cluster biosynthesis. Its function is as follows. Cysteine desulfurases mobilize the sulfur from L-cysteine to yield L-alanine, an essential step in sulfur metabolism for biosynthesis of a variety of sulfur-containing biomolecules. Component of the suf operon, which is activated and required under specific conditions such as oxidative stress and iron limitation. Acts as a potent selenocysteine lyase in vitro, that mobilizes selenium from L-selenocysteine. Selenocysteine lyase activity is however unsure in vivo. This chain is Cysteine desulfurase, found in Escherichia coli O139:H28 (strain E24377A / ETEC).